A 192-amino-acid chain; its full sequence is Fe/S biogenesis protein NfuA (192 aa).

Residues Cys149 and Cys152 each coordinate [4Fe-4S] cluster.

Belongs to the NfuA family. Homodimer. It depends on [4Fe-4S] cluster as a cofactor.

Functionally, involved in iron-sulfur cluster biogenesis. Binds a 4Fe-4S cluster, can transfer this cluster to apoproteins, and thereby intervenes in the maturation of Fe/S proteins. Could also act as a scaffold/chaperone for damaged Fe/S proteins. This chain is Fe/S biogenesis protein NfuA, found in Colwellia psychrerythraea (strain 34H / ATCC BAA-681) (Vibrio psychroerythus).